Consider the following 500-residue polypeptide: Maturase K (500 aa).

The protein belongs to the intron maturase 2 family. MatK subfamily.

It is found in the plastid. The protein resides in the chloroplast. Functionally, usually encoded in the trnK tRNA gene intron. Probably assists in splicing its own and other chloroplast group II introns. In Proboscidea louisianica (Louisiana Devil's-claw), this protein is Maturase K.